We begin with the raw amino-acid sequence, 183 residues long: Peptide deformylase (183 aa).

Positions 110 and 153 each coordinate Fe cation. Glutamate 154 is a catalytic residue. A Fe cation-binding site is contributed by histidine 157.

It belongs to the polypeptide deformylase family. Fe(2+) serves as cofactor.

It carries out the reaction N-terminal N-formyl-L-methionyl-[peptide] + H2O = N-terminal L-methionyl-[peptide] + formate. In terms of biological role, removes the formyl group from the N-terminal Met of newly synthesized proteins. Requires at least a dipeptide for an efficient rate of reaction. N-terminal L-methionine is a prerequisite for activity but the enzyme has broad specificity at other positions. This chain is Peptide deformylase, found in Listeria monocytogenes serotype 4b (strain CLIP80459).